Here is a 505-residue protein sequence, read N- to C-terminus: Alpha-1-syntrophin (505 aa).

The segment at 1–77 (MASGRRAPRT…AEPGAASPPL (77 aa)) is disordered. PH domains are found at residues 6–269 (RAPR…AQVN) and 293–401 (DIKR…DGCH). The region spanning 87-170 (RVTVRKADAG…EVVLEVKYMK (84 aa)) is the PDZ domain. Residues Ser-101, Ser-184, Ser-189, Ser-193, and Ser-200 each carry the phosphoserine modification. The segment at 180–211 (ASGTSVGWDSPPASPLQRQPSSPGPPPRDLRD) is disordered. An SU domain is found at 449–505 (PFEKLQMSSDDGASLLFLDFGGAEGEIQLDLHSCPKTMVFIIHSFLSAKVTRLGLLA). The calmodulin-binding stretch occupies residues 483 to 505 (PKTMVFIIHSFLSAKVTRLGLLA).

The protein belongs to the syntrophin family. Monomer and homodimer. Interacts with the dystrophin related protein DTNA; SGCG of the dystrophin glycoprotein complex; NOS1; GRB2; GA; TGFA; MAPK12 and the sodium channel proteins SCN4A and SCN5A. Interacts with the dystrophin protein DMD in a calmodulin dependent manner and with related protein UTRN; SGCA of the dystrophin glycoprotein complex; F-actin; calmodulin and with the other members of the syntrophin family SNTB1 and SNTB2. Interacts with MYOC; regulates muscle hypertrophy. Interacts with DTNB. Phosphorylated by CaM-kinase II. Phosphorylation may inhibit the interaction with DMD.

Its subcellular location is the cell membrane. The protein resides in the sarcolemma. The protein localises to the cell junction. It is found in the cytoplasm. It localises to the cytoskeleton. Its function is as follows. Adapter protein that binds to and probably organizes the subcellular localization of a variety of membrane proteins. May link various receptors to the actin cytoskeleton and the extracellular matrix via the dystrophin glycoprotein complex. Plays an important role in synapse formation and in the organization of UTRN and acetylcholine receptors at the neuromuscular synapse. Binds to phosphatidylinositol 4,5-bisphosphate. In Bos taurus (Bovine), this protein is Alpha-1-syntrophin (SNTA1).